The sequence spans 471 residues: Nitrosourea synthase (471 aa).

Positions 177–328 (MWLVQFAPDF…GRMAREKIIK (152 aa)) are HO-like. Residues Glu-189, Glu-215, His-225, Glu-281, His-311, Asp-315, His-318, His-407, His-409, and His-448 each contribute to the Fe(2+) site. The tract at residues 397–459 (VEPRGELSNT…ANIESDECVY (63 aa)) is cupin.

In terms of assembly, homodimer. Fe(2+) is required as a cofactor.

The catalysed reaction is N(omega)-methyl-L-arginine + 2 NADH + 3 O2 + H(+) = N(delta)-hydroxy-N(omega)-methyl-N(omega)-nitroso-L-citrulline + 2 NAD(+) + 3 H2O. It carries out the reaction N(omega)-methyl-L-arginine + NADH + O2 + H(+) = N(delta)-hydroxy-N(omega)-methyl-L-arginine + NAD(+) + H2O. It catalyses the reaction N(delta)-hydroxy-N(omega)-methyl-L-arginine + NADH + O2 = N(delta),N(omega')-dihydroxy-N(omega)-methyl-L-arginine + NAD(+) + H2O. The enzyme catalyses N(delta),N(omega')-dihydroxy-N(omega)-methyl-L-arginine + O2 = N(delta)-hydroxy-N(omega)-methyl-N(omega)-nitroso-L-citrulline + H2O. The catalysed reaction is 2 N(delta)-hydroxy-N(omega)-methyl-N(omega)-nitroso-L-citrulline + AH2 = 2 N(delta)-hydroxy-N(omega)-methyl-L-citrulline + 2 nitric oxide + A. It participates in antibiotic biosynthesis. Involved in the biosynthesis of the glucosamine-nitrosourea antibiotic streptozotocin (SZN). Catalyzes a complex multi-step reaction: the overall reaction is an oxidative rearrangement of the guanidine group of N(omega)-methyl-L-arginine (L-NMA), generating an N-nitrosourea product. SznF first hydroxylates L-NMA to form N(delta)-hydroxy-N(omega)-methyl-L-arginine (L-HMA), which is further hydroxylated to give N(delta)-hydroxy-N(omega)-hydroxy-N(omega)-methyl-L-arginine (L-DHMA). Subsequently, an oxidative rearrangement converts this intermediate to N(delta)-hydroxy-N(omega)-methyl-N(omega)-nitroso-L-citrulline. This product is unstable, and degrades non-enzymically into nitric oxide and the denitrosated product N(delta)-hydroxy-N(omega)-methyl-L-citrulline. In Streptomyces achromogenes subsp. streptozoticus, this protein is Nitrosourea synthase.